The primary structure comprises 212 residues: Thymidylate kinase (212 aa).

10–17 (GPDGAGKT) contacts ATP.

The protein belongs to the thymidylate kinase family.

The catalysed reaction is dTMP + ATP = dTDP + ADP. Its function is as follows. Phosphorylation of dTMP to form dTDP in both de novo and salvage pathways of dTTP synthesis. The polypeptide is Thymidylate kinase (Exiguobacterium sibiricum (strain DSM 17290 / CCUG 55495 / CIP 109462 / JCM 13490 / 255-15)).